We begin with the raw amino-acid sequence, 652 residues long: MCGLLAFVAAPAGAAGPEGADAASAIARASHLMRHRGPDESGTWHAVDGASGGVVFGFNRLSIIDIAHSHQPLRWGPPEAPDRYVLVFNGEIYNYLELRDELRTQHGAVFATDGDGEAILAGYHHWGTEVLQRLRGMFAFALWDTVTRELFCARDPFGIKPLFIATGAGGTAVASEKKCLLDLVELVGFDTEIDHRALQHYTVLQYVPEPETLHRGVRRLESGCFARIRADQLAPVITRYFVPRFAASPITNDNDQARYDEITAVLEDSVAKHMRADVTVGAFLSGGIDSTAIAALAIRHNPRLITFTTGFEREGFSEIDVAVASAEAIGARHIAKVVSADEFVAALPEIVWYLDEPVADPALVPLFFVAREARKHVKVVLSGEGADELFGGYTIYREPLSLRPFDYLPKPLRRSMGKVSKPLPEGMRGKSLLHRGSLTLEERYYGNARSFSGAQLREVLPGFRPDWTHTDVTAPVYAESAGWDPVARMQHIDLFTWLRGDILVKADKITMANSLELRVPFLDPEVFAVASRLPAGAKITRTTTKYALRRALEPIVPAHVLHRPKLGFPVPIRHWLRAGELLEWAYATVGSSQAGHLVDIAAVYRMLDEHRCGSSDHSRRLWTMLIFMLWHAIFVEHSVVPQISEPQYPVQL.

The For GATase activity role is filled by cysteine 2. In terms of domain architecture, Glutamine amidotransferase type-2 spans 2–231 (CGLLAFVAAP…SGCFARIRAD (230 aa)). L-glutamine is bound by residues 60–64 (RLSII), 89–91 (NGE), and aspartate 115. 382 to 383 (SG) provides a ligand contact to ATP.

Belongs to the asparagine synthetase family.

The catalysed reaction is L-aspartate + L-glutamine + ATP + H2O = L-asparagine + L-glutamate + AMP + diphosphate + H(+). It participates in amino-acid biosynthesis; L-asparagine biosynthesis; L-asparagine from L-aspartate (L-Gln route): step 1/1. In Mycobacterium bovis (strain ATCC BAA-935 / AF2122/97), this protein is Putative asparagine synthetase [glutamine-hydrolyzing] (asnB).